We begin with the raw amino-acid sequence, 248 residues long: 1-(5-phosphoribosyl)-5-[(5-phosphoribosylamino)methylideneamino] imidazole-4-carboxamide isomerase (248 aa).

The Proton acceptor role is filled by aspartate 8. Aspartate 131 acts as the Proton donor in catalysis.

This sequence belongs to the HisA/HisF family.

The protein resides in the cytoplasm. The catalysed reaction is 1-(5-phospho-beta-D-ribosyl)-5-[(5-phospho-beta-D-ribosylamino)methylideneamino]imidazole-4-carboxamide = 5-[(5-phospho-1-deoxy-D-ribulos-1-ylimino)methylamino]-1-(5-phospho-beta-D-ribosyl)imidazole-4-carboxamide. It participates in amino-acid biosynthesis; L-histidine biosynthesis; L-histidine from 5-phospho-alpha-D-ribose 1-diphosphate: step 4/9. This Nitrosomonas eutropha (strain DSM 101675 / C91 / Nm57) protein is 1-(5-phosphoribosyl)-5-[(5-phosphoribosylamino)methylideneamino] imidazole-4-carboxamide isomerase.